Reading from the N-terminus, the 189-residue chain is GTPase NRas (189 aa).

GTP contacts are provided by residues 10–18 and 29–30; these read GAGGVGKSA and VD. The Effector region motif lies at 32–40; sequence YDPTIEDSY. GTP is bound at residue 57 to 61; sequence DTAGQ. Ser-89 is subject to Phosphoserine. 116-119 lines the GTP pocket; it reads NKCD. Positions 166-185 are hypervariable region; sequence YRMKKLNSSEDGTQGCMGLP. Residue Lys-170 forms a Glycyl lysine isopeptide (Lys-Gly) (interchain with G-Cter in ubiquitin) linkage. Cys-181 carries the S-palmitoyl cysteine lipid modification. Cys-186 carries S-farnesyl cysteine lipidation. Positions 187 to 189 are cleaved as a propeptide — removed in mature form; it reads VVM.

Belongs to the small GTPase superfamily. Ras family. In terms of assembly, interacts (active GTP-bound form preferentially) with RGS14. Interacts (active GTP-bound form) with RASSF7. Interacts (active GTP-bound form) with both SHOC2 and PP1c (all isoforms) to form a tertiary complex; SHOC2 and PP1c preferably bind M-Ras/MRAS, but they also bind K-Ras/KRAS, N-Ras/NRAS and H-Ras/HRAS. Post-translationally, palmitoylated by the ZDHHC9-GOLGA7 complex. Depalmitoylated by ABHD17A, ABHD17B and ABHD17C. A continuous cycle of de- and re-palmitoylation regulates rapid exchange between plasma membrane and Golgi. In terms of processing, acetylation at Lys-104 prevents interaction with guanine nucleotide exchange factors (GEFs). Ubiquitinated by the BCR(LZTR1) E3 ubiquitin ligase complex at Lys-170 in a non-degradative manner, leading to inhibit Ras signaling by decreasing Ras association with membranes. Post-translationally, phosphorylation at Ser-89 enhances NRAS association with its downstream effectors.

The protein localises to the cell membrane. It localises to the golgi apparatus membrane. It carries out the reaction GTP + H2O = GDP + phosphate + H(+). Alternates between an inactive form bound to GDP and an active form bound to GTP. Activated by a guanine nucleotide-exchange factor (GEF) and inactivated by a GTPase-activating protein (GAP). Functionally, ras proteins bind GDP/GTP and possess intrinsic GTPase activity. The chain is GTPase NRas (Nras) from Rattus norvegicus (Rat).